Here is a 242-residue protein sequence, read N- to C-terminus: MDNIRTVSDTKRKFYGYHTRPINSIYRRFVEELLVEMHLLSVNVDFKYDPIYALGVVTSFERFMQGYSPESDKTSIFNALCQAVDGNSEQYHQEAEALINEAKGLSITEFKEKLGQEGGDGILWGTCGAIAQNPKFKYSRLFGVGLYTLLMEIDPDLVKEEDKRNQTIKEVSDALQFSSDKLQKDLDLYRSNLDKMQQLLTVIEDTLEADRKKRASQKLEKKPEVVEEKEHKENEEQQQSSN.

Residues 178 to 209 are a coiled coil; it reads SSDKLQKDLDLYRSNLDKMQQLLTVIEDTLEA. Positions 212–242 are disordered; it reads KKRASQKLEKKPEVVEEKEHKENEEQQQSSN. The span at 217 to 235 shows a compositional bias: basic and acidic residues; it reads QKLEKKPEVVEEKEHKENE.

The protein belongs to the THF1 family.

Functionally, may be involved in photosynthetic membrane biogenesis. The chain is Protein Thf1 from Crocosphaera subtropica (strain ATCC 51142 / BH68) (Cyanothece sp. (strain ATCC 51142)).